A 305-amino-acid polypeptide reads, in one-letter code: Tyrosine recombinase XerC (305 aa).

One can recognise a Core-binding (CB) domain in the interval 1 to 93; sequence MVLDGFAAHF…SWRQYCVWLV (93 aa). Residues 114-294 form the Tyr recombinase domain; it reads RVPKALPQEW…DFDHIARLYD (181 aa). Residues Arg155, Lys179, His246, Arg249, and His272 contribute to the active site. Tyr281 acts as the O-(3'-phospho-DNA)-tyrosine intermediate in catalysis.

This sequence belongs to the 'phage' integrase family. XerC subfamily. Forms a cyclic heterotetrameric complex composed of two molecules of XerC and two molecules of XerD.

The protein resides in the cytoplasm. Site-specific tyrosine recombinase, which acts by catalyzing the cutting and rejoining of the recombining DNA molecules. The XerC-XerD complex is essential to convert dimers of the bacterial chromosome into monomers to permit their segregation at cell division. It also contributes to the segregational stability of plasmids. The sequence is that of Tyrosine recombinase XerC from Neisseria meningitidis serogroup C (strain 053442).